Reading from the N-terminus, the 87-residue chain is Apolipoprotein C-I (87 aa).

The signal sequence occupies residues 1 to 26; it reads MRLILSLPVLAVVLAMVLEGPAPAQA.

Belongs to the apolipoprotein C1 family.

The protein localises to the secreted. Its function is as follows. Inhibitor of lipoprotein binding to the low density lipoprotein (LDL) receptor, LDL receptor-related protein, and very low density lipoprotein (VLDL) receptor. Associates with high density lipoproteins (HDL) and the triacylglycerol-rich lipoproteins in the plasma and makes up about 10% of the protein of the VLDL and 2% of that of HDL. Appears to interfere directly with fatty acid uptake and is also the major plasma inhibitor of cholesteryl ester transfer protein (CETP). Binds free fatty acids and reduces their intracellular esterification. Modulates the interaction of APOE with beta-migrating VLDL and inhibits binding of beta-VLDL to the LDL receptor-related protein. The protein is Apolipoprotein C-I (APOC1) of Pteropus vampyrus (Large flying fox).